A 229-amino-acid polypeptide reads, in one-letter code: Ferric nitrobindin-like protein (229 aa).

The interval 1–54 (MSENSTPNNPVVPGAGADGPSLSDSASISGSDAVNLAAEQSKSTAHRNIPGLGD) is disordered. The segment covering 18–33 (DGPSLSDSASISGSDA) has biased composition (low complexity). The short motif at 82-88 (GVWRGEG) is the GXWXGXG element.

The protein belongs to the nitrobindin family.

In Corynebacterium glutamicum (strain R), this protein is Ferric nitrobindin-like protein.